Reading from the N-terminus, the 37-residue chain is Photosystem II reaction center protein M (37 aa).

A helical transmembrane segment spans residues 5–25; that stretch reads ILAFIATALFILVPTAFLLII.

Belongs to the PsbM family. As to quaternary structure, PSII is composed of 1 copy each of membrane proteins PsbA, PsbB, PsbC, PsbD, PsbE, PsbF, PsbH, PsbI, PsbJ, PsbK, PsbL, PsbM, PsbT, PsbX, PsbY, PsbZ, Psb30/Ycf12, at least 3 peripheral proteins of the oxygen-evolving complex and a large number of cofactors. It forms dimeric complexes.

It localises to the plastid. The protein localises to the chloroplast thylakoid membrane. Its function is as follows. One of the components of the core complex of photosystem II (PSII). PSII is a light-driven water:plastoquinone oxidoreductase that uses light energy to abstract electrons from H(2)O, generating O(2) and a proton gradient subsequently used for ATP formation. It consists of a core antenna complex that captures photons, and an electron transfer chain that converts photonic excitation into a charge separation. This subunit is found at the monomer-monomer interface. The sequence is that of Photosystem II reaction center protein M from Pelargonium hortorum (Common geranium).